The sequence spans 112 residues: Protein Churchill (112 aa).

Positions 2, 5, 30, 33, 59, 61, 64, 66, 71, 88, and 91 each coordinate Zn(2+).

The protein belongs to the Churchill family.

Its function is as follows. Transcriptional activator that mediates FGF signaling during neural development. Plays a role in the regulation of cell movement. Does not bind DNA by itself. This is Protein Churchill (churc1) from Xenopus laevis (African clawed frog).